We begin with the raw amino-acid sequence, 67 residues long: Potassium channel toxin alpha-KTx 6.16 (67 aa).

A signal peptide spans 1–24 (MNLKLALVLLLTVINVGMLPGATS). 4 cysteine pairs are disulfide-bonded: Cys-34/Cys-55, Cys-40/Cys-60, Cys-44/Cys-62, and Cys-50/Cys-65.

This sequence belongs to the short scorpion toxin superfamily. Potassium channel inhibitor family. Alpha-KTx 06 subfamily. Expressed by the venom gland.

The protein resides in the secreted. Functionally, inhibits voltage-gated potassium channels. This is Potassium channel toxin alpha-KTx 6.16 from Opisthacanthus cayaporum (South American scorpion).